The chain runs to 304 residues: Acetaldehyde dehydrogenase 4 (304 aa).

Catalysis depends on cysteine 131, which acts as the Acyl-thioester intermediate. NAD(+) contacts are provided by residues 162 to 170 and asparagine 273; that span reads SAGPGTRKN.

This sequence belongs to the acetaldehyde dehydrogenase family. In terms of assembly, heterotetramer composed of two BphI (aldolase) and two BphJ (dehydrogenase).

It catalyses the reaction acetaldehyde + NAD(+) + CoA = acetyl-CoA + NADH + H(+). It carries out the reaction propanal + NAD(+) + CoA = propanoyl-CoA + NADH + H(+). It participates in xenobiotic degradation; polychlorinated biphenyl degradation. Its activity is regulated as follows. Bound pyruvate or other intermediates in the aldol addition reaction catalyzed by BphI allosterically activates BphJ reductive deacylation activity. Its function is as follows. Catalyzes the conversion of acetaldehyde or propanal to acetyl-CoA or propanoyl-CoA, respectively, using NAD(+) and coenzyme A. Displays broad specificity since it can utilize aliphatic aldehydes from two to five carbons in length as substrates; the aldehyde substrates can be directly channeled from the aldolase BphI to the dehydrogenase BphJ. Is the final enzyme in the meta-cleavage pathway for the degradation of polychlorinated biphenyls (PCBs). Is also able to utilize NADP(+) instead of NAD(+). Is not active with succinic semialdehyde or picolinaldehyde as substrates. Can also catalyze the reverse reaction, i.e. the reductive deacylation of acetyl-CoA to acetaldehyde, which is then channeled to the BphI active site. The BphI-BphJ enzyme complex exhibits unique bidirectionality in substrate channeling and allosteric activation. The chain is Acetaldehyde dehydrogenase 4 (bphJ) from Paraburkholderia xenovorans (strain LB400).